Consider the following 214-residue polypeptide: Large ribosomal subunit protein uL16 (214 aa).

This sequence belongs to the universal ribosomal protein uL16 family. Component of the large ribosomal subunit. Mature ribosomes consist of a small (40S) and a large (60S) subunit. The 40S subunit contains about 33 different proteins and 1 molecule of RNA (18S). The 60S subunit contains about 49 different proteins and 3 molecules of RNA (28S, 5.8S and 5S).

This chain is Large ribosomal subunit protein uL16 (rpl-10L), found in Caenorhabditis elegans.